The following is a 335-amino-acid chain: Ethanol acetyltransferase 1 (335 aa).

An AB hydrolase-1 domain is found at Pro48–Arg300. Residues Ser121, Asp145, and His294 each act as charge relay system in the active site.

The protein belongs to the AB hydrolase superfamily.

The protein localises to the mitochondrion. The enzyme catalyses ethanol + acetyl-CoA = ethyl acetate + CoA. The catalysed reaction is acetyl-CoA + H2O = acetate + CoA + H(+). It carries out the reaction ethyl acetate + H2O = ethanol + acetate + H(+). Its function is as follows. Alcohol acetyltransferase that catalyzes the synthesis of ethyl acetate from ethanol and acetyl-CoA. Can also function as a thioesterase by hydrolyzing acetyl-CoA in the absence of ethanol, as well as esterase hydrolyzing ethyl acetate. The protein is Ethanol acetyltransferase 1 (EAT1) of Cyberlindnera fabianii (Yeast).